Reading from the N-terminus, the 389-residue chain is Chalcone synthase 4-1 (389 aa).

The active site involves cysteine 164.

Belongs to the thiolase-like superfamily. Chalcone/stilbene synthases family.

The enzyme catalyses (E)-4-coumaroyl-CoA + 3 malonyl-CoA + 3 H(+) = 2',4,4',6'-tetrahydroxychalcone + 3 CO2 + 4 CoA. Its pathway is secondary metabolite biosynthesis; flavonoid biosynthesis. Functionally, the primary product of this enzyme is 4,2',4',6'-tetrahydroxychalcone (also termed naringenin-chalcone or chalcone) which can under specific conditions spontaneously isomerize into naringenin. The protein is Chalcone synthase 4-1 (CHS4-1) of Medicago sativa (Alfalfa).